Consider the following 70-residue polypeptide: MPKEIKEIKDFLVKARRKDAKSVKIKKNSNNTKFKVRCASYLYTLVVADKDKAEKLKQSLPPGIQVKELK.

It belongs to the eukaryotic ribosomal protein eL38 family.

The protein is Large ribosomal subunit protein eL38 (rpl-38) of Caenorhabditis elegans.